Reading from the N-terminus, the 589-residue chain is Probable methyltransferase PMT23 (589 aa).

Residues 1–4 (MAIS) are Cytoplasmic-facing. A helical; Signal-anchor for type II membrane protein transmembrane segment spans residues 5 to 25 (VQHVVVLLLSTLLIAITFFLF). Residues 26-589 (TSDNARFPFP…FWRPAKPELR (564 aa)) are Lumenal-facing. Residues N70, N375, and N442 are each glycosylated (N-linked (GlcNAc...) asparagine).

Belongs to the methyltransferase superfamily.

Its subcellular location is the golgi apparatus membrane. The chain is Probable methyltransferase PMT23 from Arabidopsis thaliana (Mouse-ear cress).